Reading from the N-terminus, the 181-residue chain is Transcription termination/antitermination protein NusG (181 aa).

Residues Pro-130 to Leu-158 enclose the KOW domain.

It belongs to the NusG family. In terms of assembly, monomer. Interacts with the transcription termination factor Rho and with RNA polymerase.

Participates in transcription elongation, termination and antitermination. In the absence of Rho, increases the rate of transcription elongation by the RNA polymerase (RNAP), probably by partially suppressing pausing. In the presence of Rho, modulates most Rho-dependent termination events by interacting with the RNAP to render the complex more susceptible to the termination activity of Rho. May be required to overcome a kinetic limitation of Rho to function at certain terminators. Also involved in ribosomal RNA transcriptional antitermination. This is Transcription termination/antitermination protein NusG from Buchnera aphidicola subsp. Baizongia pistaciae (strain Bp).